The following is a 257-amino-acid chain: MGRGKVELKRIENKISRQVTFAKRRNGLLKKAYELSLLCDAEVALIIFSGRGRLFEFSSSSCMYKTLERYRSCNYNSQDAAAPENEINYQEYLKLKTRVEFLQTTQRNILGEDLGPLSMKELEQLENQIEVSLKQIRSRKNQALLDQLFDLKSKEQQLQDLNKDLRKKLQETSAENVLHMSWQDGGGHSGSSTVLADQPHHHQGLLHPHPDQGDHSLQIGYHHPHAHHHQAYMDHLSNEAADMVAHHPNEHIPSGWI.

The MADS-box domain occupies Met1–Ser61. The K-box domain occupies Asn85–Glu175.

In terms of assembly, may interact with the K-box of MADS6, MADS14 and MADS15.

The protein localises to the nucleus. In terms of biological role, probable transcription factor involved in the development of floral organs. Required for the formation of inner floral organs (lodicules, stamens and carpels, or whorls 2, 3 and 4) and the lemma and palea (whorl 1), which are grass floral organs analogous to sepals. May be involved in the control of flowering time. Seems to act as transcriptional activator. May act upstream of the auxin-responsive protein GH3.8. This is MADS-box transcription factor 1 (MADS1) from Oryza sativa subsp. indica (Rice).